A 212-amino-acid chain; its full sequence is Thiamine-phosphate synthase (212 aa).

4-amino-2-methyl-5-(diphosphooxymethyl)pyrimidine contacts are provided by residues Q43 to K47 and N75. Residues D76 and D95 each coordinate Mg(2+). A 4-amino-2-methyl-5-(diphosphooxymethyl)pyrimidine-binding site is contributed by S114. S141 to T143 is a binding site for 2-[(2R,5Z)-2-carboxy-4-methylthiazol-5(2H)-ylidene]ethyl phosphate. K144 contributes to the 4-amino-2-methyl-5-(diphosphooxymethyl)pyrimidine binding site. A 2-[(2R,5Z)-2-carboxy-4-methylthiazol-5(2H)-ylidene]ethyl phosphate-binding site is contributed by G171.

The protein belongs to the thiamine-phosphate synthase family. Mg(2+) is required as a cofactor.

The catalysed reaction is 2-[(2R,5Z)-2-carboxy-4-methylthiazol-5(2H)-ylidene]ethyl phosphate + 4-amino-2-methyl-5-(diphosphooxymethyl)pyrimidine + 2 H(+) = thiamine phosphate + CO2 + diphosphate. It carries out the reaction 2-(2-carboxy-4-methylthiazol-5-yl)ethyl phosphate + 4-amino-2-methyl-5-(diphosphooxymethyl)pyrimidine + 2 H(+) = thiamine phosphate + CO2 + diphosphate. The enzyme catalyses 4-methyl-5-(2-phosphooxyethyl)-thiazole + 4-amino-2-methyl-5-(diphosphooxymethyl)pyrimidine + H(+) = thiamine phosphate + diphosphate. The protein operates within cofactor biosynthesis; thiamine diphosphate biosynthesis; thiamine phosphate from 4-amino-2-methyl-5-diphosphomethylpyrimidine and 4-methyl-5-(2-phosphoethyl)-thiazole: step 1/1. Functionally, condenses 4-methyl-5-(beta-hydroxyethyl)thiazole monophosphate (THZ-P) and 2-methyl-4-amino-5-hydroxymethyl pyrimidine pyrophosphate (HMP-PP) to form thiamine monophosphate (TMP). In Nitrosomonas eutropha (strain DSM 101675 / C91 / Nm57), this protein is Thiamine-phosphate synthase.